Consider the following 449-residue polypeptide: Na(+)/H(+) antiporter NhaA 1 (449 aa).

11 helical membrane passes run 32–52, 87–107, 114–134, 145–165, 174–194, 202–222, 233–253, 318–338, 347–367, 382–402, and 417–437; these read IEAT…TLSN, GLMT…VVLG, MVAF…GLYL, GWGV…ALLG, VFLL…VAVG, TALA…LLGV, AIIW…GVIL, WVAF…SITI, LAVM…FAWL, WGGL…ALFI, and LGIL…LCMF.

This sequence belongs to the NhaA Na(+)/H(+) (TC 2.A.33) antiporter family.

It localises to the cell inner membrane. The catalysed reaction is Na(+)(in) + 2 H(+)(out) = Na(+)(out) + 2 H(+)(in). Na(+)/H(+) antiporter that extrudes sodium in exchange for external protons. This chain is Na(+)/H(+) antiporter NhaA 1, found in Acidiphilium cryptum (strain JF-5).